Reading from the N-terminus, the 482-residue chain is UDP-N-acetylmuramate--L-alanine ligase (482 aa).

123 to 129 contributes to the ATP binding site; sequence GTHGKTT.

This sequence belongs to the MurCDEF family.

The protein resides in the cytoplasm. It catalyses the reaction UDP-N-acetyl-alpha-D-muramate + L-alanine + ATP = UDP-N-acetyl-alpha-D-muramoyl-L-alanine + ADP + phosphate + H(+). It functions in the pathway cell wall biogenesis; peptidoglycan biosynthesis. Cell wall formation. This Pseudomonas putida (strain W619) protein is UDP-N-acetylmuramate--L-alanine ligase.